The sequence spans 294 residues: 4-hydroxy-tetrahydrodipicolinate synthase (294 aa).

A pyruvate-binding site is contributed by Thr-44. Tyr-132 functions as the Proton donor/acceptor in the catalytic mechanism. Lys-161 functions as the Schiff-base intermediate with substrate in the catalytic mechanism. Ile-203 is a pyruvate binding site.

It belongs to the DapA family. Homotetramer; dimer of dimers.

It is found in the cytoplasm. It catalyses the reaction L-aspartate 4-semialdehyde + pyruvate = (2S,4S)-4-hydroxy-2,3,4,5-tetrahydrodipicolinate + H2O + H(+). The protein operates within amino-acid biosynthesis; L-lysine biosynthesis via DAP pathway; (S)-tetrahydrodipicolinate from L-aspartate: step 3/4. Its function is as follows. Catalyzes the condensation of (S)-aspartate-beta-semialdehyde [(S)-ASA] and pyruvate to 4-hydroxy-tetrahydrodipicolinate (HTPA). The sequence is that of 4-hydroxy-tetrahydrodipicolinate synthase from Aquifex aeolicus (strain VF5).